A 239-amino-acid polypeptide reads, in one-letter code: DNA repair protein RecO (239 aa).

Belongs to the RecO family.

Involved in DNA repair and RecF pathway recombination. The chain is DNA repair protein RecO from Bifidobacterium longum subsp. infantis (strain ATCC 15697 / DSM 20088 / JCM 1222 / NCTC 11817 / S12).